Consider the following 432-residue polypeptide: Amino-acid acetyltransferase (432 aa).

The N-acetyltransferase domain occupies 286–425 (EQLREAGIED…ASLYNFQRNS (140 aa)).

Belongs to the acetyltransferase family. ArgA subfamily.

The protein resides in the cytoplasm. The catalysed reaction is L-glutamate + acetyl-CoA = N-acetyl-L-glutamate + CoA + H(+). The protein operates within amino-acid biosynthesis; L-arginine biosynthesis; N(2)-acetyl-L-ornithine from L-glutamate: step 1/4. In Pseudomonas paraeruginosa (strain DSM 24068 / PA7) (Pseudomonas aeruginosa (strain PA7)), this protein is Amino-acid acetyltransferase.